The following is a 276-amino-acid chain: Diaminopimelate epimerase (276 aa).

The substrate site is built by Asn-13, Gln-46, and Asn-66. Cys-75 acts as the Proton donor in catalysis. Substrate-binding positions include 76–77 (GN), Asn-159, Asn-192, and 210–211 (ER). The Proton acceptor role is filled by Cys-219. Substrate is bound at residue 220 to 221 (GT).

It belongs to the diaminopimelate epimerase family. As to quaternary structure, homodimer.

Its subcellular location is the cytoplasm. It catalyses the reaction (2S,6S)-2,6-diaminopimelate = meso-2,6-diaminopimelate. It participates in amino-acid biosynthesis; L-lysine biosynthesis via DAP pathway; DL-2,6-diaminopimelate from LL-2,6-diaminopimelate: step 1/1. In terms of biological role, catalyzes the stereoinversion of LL-2,6-diaminopimelate (L,L-DAP) to meso-diaminopimelate (meso-DAP), a precursor of L-lysine and an essential component of the bacterial peptidoglycan. The protein is Diaminopimelate epimerase of Hahella chejuensis (strain KCTC 2396).